The chain runs to 439 residues: Dihydroorotase (439 aa).

H73 and H75 together coordinate Zn(2+). Substrate is bound by residues 75–77 (HLR) and N107. 3 residues coordinate Zn(2+): D165, H192, and H245. N291 lines the substrate pocket. Zn(2+) is bound at residue D318. Residue D318 is part of the active site. Residue H322 coordinates substrate.

Belongs to the metallo-dependent hydrolases superfamily. DHOase family. Class I DHOase subfamily. Requires Zn(2+) as cofactor.

It catalyses the reaction (S)-dihydroorotate + H2O = N-carbamoyl-L-aspartate + H(+). It participates in pyrimidine metabolism; UMP biosynthesis via de novo pathway; (S)-dihydroorotate from bicarbonate: step 3/3. Functionally, catalyzes the reversible cyclization of carbamoyl aspartate to dihydroorotate. In Syntrophobacter fumaroxidans (strain DSM 10017 / MPOB), this protein is Dihydroorotase.